Reading from the N-terminus, the 235-residue chain is MMTLLAILAVSYIIGSIPTSIMAGKMLKRIDIRQFGSGNAGGTNAFRVLGWKTGLSVTLIDIAKGVIAAVSVVAFFRMHPIGAYPDINEVALRLLAGMAAVIGHVFTVFAGFKGGKGVSTAAGMLIGIAPVSMLIVIGIFLLTVWLSRYVSVASILAAIAFPLIIAIRKYVFELGGGLDYYIRLFGESFSFHDSLDYHLMIFGLIVALAILYTHRANIRRLISGTENRITFGKSA.

Transmembrane regions (helical) follow at residues 4–24 (LLAI…IMAG), 56–76 (SVTL…VAFF), 94–114 (LLAG…GFKG), 125–145 (LIGI…LTVW), 152–172 (VASI…KYVF), and 191–211 (FHDS…LAIL).

Belongs to the PlsY family. Probably interacts with PlsX.

The protein localises to the cell inner membrane. The enzyme catalyses an acyl phosphate + sn-glycerol 3-phosphate = a 1-acyl-sn-glycero-3-phosphate + phosphate. The protein operates within lipid metabolism; phospholipid metabolism. Functionally, catalyzes the transfer of an acyl group from acyl-phosphate (acyl-PO(4)) to glycerol-3-phosphate (G3P) to form lysophosphatidic acid (LPA). This enzyme utilizes acyl-phosphate as fatty acyl donor, but not acyl-CoA or acyl-ACP. In Chlorobium luteolum (strain DSM 273 / BCRC 81028 / 2530) (Pelodictyon luteolum), this protein is Glycerol-3-phosphate acyltransferase.